We begin with the raw amino-acid sequence, 358 residues long: MTESPTTHHGAAPPDSVATPVRPWSEFRLTPAEAAAAAALAARCAQRYDETDGPEFLLDAPVIAHELPRRLRTFMARARLDAWPHALVVRGNPVDDAALGSTPVHWRTARTPGSRPLSFLLMLYAGLLGDVFGWATQQDGRVVTDVLPIKGGEHTLVSSSSRQELGWHTEDAFSPYRADYVGLLSLRNPDGVATTLAGVPLDDLDERTLDVLFQERFLIRPDDSHLQVNNSTAQQGRVEFEGIAQAADRPEPVAILTGHRAAPHLRVDGDFSAPAEGDEEAAAALGTLRKLIDASLYELVLDQGDVAFIDNRRAVHGRRAFQPRYDGRDRWLKRINITRDLHRSRKAWAGDSRVLGQR.

Residues 1–21 (MTESPTTHHGAAPPDSVATPV) are disordered. A helical membrane pass occupies residues 117–135 (LSFLLMLYAGLLGDVFGWA). 156 to 158 (LVS) contacts L-arginine. H168 and E170 together coordinate Fe cation. Residue T194 coordinates 2-oxoglutarate. 268 to 270 (DGD) provides a ligand contact to L-arginine. H316 is a binding site for Fe cation. 2-oxoglutarate contacts are provided by R330 and R334. L-arginine is bound at residue R334.

Belongs to the clavaminate synthase family. Requires Fe cation as cofactor.

The protein resides in the membrane. It carries out the reaction L-arginine + 2-oxoglutarate + O2 = (2S,3S)-hydroxyarginine + succinate + CO2. It participates in antibiotic biosynthesis. Involved in the biosynthesis of capreomycidine, an unusual amino acid used by non-ribosomal peptide synthases (NRPS) to make the tuberactinomycin class of peptide antibiotics such as viomycin and capreomycin. Catalyzes the stereospecific hydroxylation of the C3 of (2S)-arginine to generate (3S)-hydroxy-(2S)-arginine. Usually clavaminic acid synthase-like oxygenases catalyze the formation of threo diastereomers, however VioC produces the erythro diastereomer of beta-carbon-hydroxylated L-arginine. It exerts a broad substrate specificity by accepting the analogs L-homoarginine and L-canavanine for the beta-carbon hydroxylation. This Streptomyces vinaceus protein is Alpha-ketoglutarate-dependent L-arginine hydroxylase (vioC).